Reading from the N-terminus, the 644-residue chain is Complement component C1q receptor (644 aa).

Positions 1 to 22 (MAISTGLFLLLGLLGQPWAGAA) are cleaved as a signal peptide. Residues 23–572 (ADSQAVVCEG…SAHSDTDGQN (550 aa)) lie on the Extracellular side of the membrane. One can recognise a C-type lectin domain in the interval 31–173 (EGTACYTAHW…CGTPEAPGNS (143 aa)). Asn-102 carries an N-linked (GlcNAc...) asparagine glycan. 16 cysteine pairs are disulfide-bonded: Cys-140–Cys-164, Cys-261–Cys-272, Cys-268–Cys-282, Cys-284–Cys-297, Cys-303–Cys-314, Cys-308–Cys-325, Cys-327–Cys-340, Cys-346–Cys-355, Cys-351–Cys-364, Cys-366–Cys-380, Cys-386–Cys-397, Cys-393–Cys-406, Cys-408–Cys-422, Cys-428–Cys-440, Cys-436–Cys-449, and Cys-451–Cys-464. EGF-like domains are found at residues 257-298 (PKFG…VTCA) and 299-341 (SRNP…VHCV). Asn-322 carries an N-linked (GlcNAc...) asparagine glycan. The EGF-like 3; calcium-binding domain maps to 342 to 381 (DIDECQDSPCAQDCVNTLGSFHCECWVGYQPSGPKEEACE). Positions 382 to 423 (DVDECAAANSPCAQGCINTDGSFYCSCKEGYIVSGEDSTQCE) constitute an EGF-like 4; calcium-binding domain. Positions 424-465 (DIDECSDARGNPCDSLCFNTDGSFRCGCPPGWELAPNGVFCS) constitute an EGF-like 5; calcium-binding domain. Residues 473–508 (LPARPPQKEDNDDRKESTMPPTEMPSSPSGSKDVSN) are disordered. Basic and acidic residues predominate over residues 478-489 (PQKEDNDDRKES). Residues 490–501 (TMPPTEMPSSPS) are compositionally biased toward low complexity. The chain crosses the membrane as a helical span at residues 573-593 (LLLFYILGTVVAISLLLVLAL). Topologically, residues 594-644 (GILIYHKRRAKKEEIKEKKPQNAADSYSWVPERAESQAPENQYSPTPGTDC) are cytoplasmic. Residues 605–644 (KEEIKEKKPQNAADSYSWVPERAESQAPENQYSPTPGTDC) form a disordered region. Ser-619 is modified (phosphoserine). Phosphotyrosine occurs at positions 620 and 636. Positions 631–644 (APENQYSPTPGTDC) are enriched in polar residues.

Homodimer. Interacts with C1QBP; the association may represent a cell surface C1q receptor. Interacts with surfactant protein A/SFTPA1. Interacts with multimerin-2/MMRN2. Interacts with DAG1; this interaction plays an important role in endothelial cell migration. Interacts with CBL. Interacts with IGFBP7. Interacts with VEGFR2. Post-translationally, N- and O-glycosylated. In terms of processing, phosphorylated on Tyr-620 and Tyr-636 by SRC; these phosphorylations promote endothelial cell adhesion and migration. In terms of tissue distribution, expressed in lung, heart and bone marrow. Expressed at lower level in ovary, whole embryo and fetal liver. Not detected in brain, adult liver or thymus. Highly expressed in peritoneal cavity and bone marrow macrophages. Not detected in epithelial cells.

The protein localises to the cell membrane. Functionally, cell surface receptor that plays a role in various physiological processes including inflammation, phagocytosis, and cell adhesion. Plays a role in phagocytosis and enhances the uptake of apoptotic cells and immune complexes by acting as a receptor for defense collagens including surfactant protein A/SFTPA1, C1q, and mannose-binding lectin (MBL2). Plays a role in the regulation of endothelial cell function and adhesion by activating angiogenesis. Mechanistically, exerts its angiogenic function by associating with beta-dystroglycan, leading to SRC-dependent phosphorylation and subsequent recruitment of CBL. In turn, CBL provides a docking site for downstream signaling components, such as CRKL to enhance cell migration. Participates in angiogenesis also by acting as a receptor for the ECM pan-endothelial glycoprotein multimerin-2/MMRN2 and IGFBP7 ligands. Both ligands play a non-redundant role in CD93-mediated endothelial cell function. Acts as a key regulator of endothelial barrier function through modulating VEGFR2 function. This Mus musculus (Mouse) protein is Complement component C1q receptor (Cd93).